The chain runs to 382 residues: Lipid-A-disaccharide synthase (382 aa).

This sequence belongs to the LpxB family.

It carries out the reaction 2-N,3-O-bis[(3R)-3-hydroxytetradecanoyl]-alpha-D-glucosaminyl 1-phosphate + UDP-2-N,3-O-bis[(3R)-3-hydroxytetradecanoyl]-alpha-D-glucosamine = lipid A disaccharide (E. coli) + UDP + H(+). The enzyme catalyses a lipid X + a UDP-2-N,3-O-bis[(3R)-3-hydroxyacyl]-alpha-D-glucosamine = a lipid A disaccharide + UDP + H(+). It participates in glycolipid biosynthesis; lipid IV(A) biosynthesis; lipid IV(A) from (3R)-3-hydroxytetradecanoyl-[acyl-carrier-protein] and UDP-N-acetyl-alpha-D-glucosamine: step 5/6. Condensation of UDP-2,3-diacylglucosamine and 2,3-diacylglucosamine-1-phosphate to form lipid A disaccharide, a precursor of lipid A, a phosphorylated glycolipid that anchors the lipopolysaccharide to the outer membrane of the cell. The sequence is that of Lipid-A-disaccharide synthase from Salmonella arizonae (strain ATCC BAA-731 / CDC346-86 / RSK2980).